The sequence spans 231 residues: MIP18 family protein YHR122W (231 aa).

Disordered regions lie at residues 1-26 (MSEFLNENPDILEENQLPTRKEDSTK) and 75-100 (LTSDEDSLPAESEDESVAGGGKEEEE). The residue at position 2 (Ser-2) is an N-acetylserine. A compositionally biased stretch (acidic residues) spans 76–90 (TSDEDSLPAESEDES).

The protein belongs to the MIP18 family.

In terms of biological role, may play a role in chromosome segregation through establishment of sister chromatid cohesion. This is MIP18 family protein YHR122W from Saccharomyces cerevisiae (strain ATCC 204508 / S288c) (Baker's yeast).